The primary structure comprises 445 residues: Phenylacetate-coenzyme A ligase (445 aa).

Belongs to the phenylacetyl-CoA ligase family. Monomer.

The enzyme catalyses 2-phenylacetate + ATP + CoA = phenylacetyl-CoA + AMP + diphosphate. It functions in the pathway aromatic compound metabolism; phenylacetate degradation. Functionally, catalyzes the activation of phenylacetic acid (PA) to phenylacetyl-CoA (PA-CoA). Involved in the phenylalanine metabolism. The polypeptide is Phenylacetate-coenzyme A ligase (Thermus thermophilus (strain ATCC BAA-163 / DSM 7039 / HB27)).